The primary structure comprises 86 residues: UPF0457 protein SERP1772 (86 aa).

This sequence belongs to the UPF0457 family.

This is UPF0457 protein SERP1772 from Staphylococcus epidermidis (strain ATCC 35984 / DSM 28319 / BCRC 17069 / CCUG 31568 / BM 3577 / RP62A).